The sequence spans 202 residues: Small ribosomal subunit protein uS2 (202 aa).

The protein belongs to the universal ribosomal protein uS2 family.

The protein is Small ribosomal subunit protein uS2 of Methanocorpusculum labreanum (strain ATCC 43576 / DSM 4855 / Z).